The sequence spans 415 residues: Packaging protein 3 (415 aa).

Disordered regions lie at residues 1 to 56 and 66 to 85; these read MHPV…RRRA and EGLA…VQLK. An interaction with packaging protein 1 region spans residues 1–173; the sequence is MHPVLRQMRP…VNQEINFQKS (173 aa). A compositionally biased stretch (low complexity) spans 31 to 46; sequence PTASGGATSAADAAAD. Position 75 is a phosphoserine; by host (Ser75). Basic and acidic residues predominate over residues 76–85; that stretch reads PERHPRVQLK. Ser360 is subject to Phosphoserine; by host. The span at 381-394 shows a compositional bias: low complexity; that stretch reads GAGPGLAVAPARAG. Positions 381-415 are disordered; sequence GAGPGLAVAPARAGNVGGVEEYDEDDEYEPEDGEY. The span at 400–415 shows a compositional bias: acidic residues; it reads EEYDEDDEYEPEDGEY.

Belongs to the adenoviridae packaging protein 3 family. In terms of assembly, part of the genome packaging complex composed of packaging proteins 1, 2 and 3; this complex specifically binds to the packaging sequence on the left end of viral genomic DNA and performs packaging of the viral genome. Interacts with hexon-linking protein IIIa; this interaction is required to promote correct genome packaging. Cleaved at different sites by the viral protease during virion maturation.

The protein resides in the host nucleus. Involved in viral genome packaging through its interaction with packaging proteins 1 and 2. After proteolytic cleavage by adenovirus protease, L1 52/55k protein is removed from the capsid during viral maturation. The polypeptide is Packaging protein 3 (Human adenovirus C serotype 2 (HAdV-2)).